The chain runs to 64 residues: Large ribosomal subunit protein bL32 (64 aa).

The span at 1–16 (MAVPKHRKSKAKKRSR) shows a compositional bias: basic residues. The tract at residues 1–22 (MAVPKHRKSKAKKRSRQAANDK) is disordered.

The protein belongs to the bacterial ribosomal protein bL32 family.

In Brachyspira hyodysenteriae (strain ATCC 49526 / WA1), this protein is Large ribosomal subunit protein bL32.